The sequence spans 828 residues: Periplasmic nitrate reductase (828 aa).

A signal peptide (tat-type signal) is located at residues 1–31 (MKLSRRSFMKANAVAAAAAAAGLSVPGVARA). A 4Fe-4S Mo/W bis-MGD-type domain is found at 39–95 (IKWDKAPCRFCGTGCGVLVGTQQGRVVACQGDPDAPVNRGLNCIKGYFLPKIMYGKD). Residues Cys-46, Cys-49, Cys-53, and Cys-81 each contribute to the [4Fe-4S] cluster site. Mo-bis(molybdopterin guanine dinucleotide)-binding positions include Lys-83, Gln-150, Asn-175, Cys-179, 212-219 (WGSNMAEM), 243-247 (STFQH), 262-264 (QSD), Met-372, Gln-376, Asn-482, 508-509 (SD), Lys-531, Asp-558, and 718-727 (TGRVLEHWHT). Phe-794 serves as a coordination point for substrate. The Mo-bis(molybdopterin guanine dinucleotide) site is built by Asn-802 and Lys-819.

The protein belongs to the prokaryotic molybdopterin-containing oxidoreductase family. NasA/NapA/NarB subfamily. In terms of assembly, component of the periplasmic nitrate reductase NapAB complex composed of NapA and NapB. It depends on [4Fe-4S] cluster as a cofactor. Mo-bis(molybdopterin guanine dinucleotide) serves as cofactor. Predicted to be exported by the Tat system. The position of the signal peptide cleavage has not been experimentally proven.

Its subcellular location is the periplasm. The enzyme catalyses 2 Fe(II)-[cytochrome] + nitrate + 2 H(+) = 2 Fe(III)-[cytochrome] + nitrite + H2O. Catalytic subunit of the periplasmic nitrate reductase complex NapAB. Receives electrons from NapB and catalyzes the reduction of nitrate to nitrite. This chain is Periplasmic nitrate reductase, found in Salmonella paratyphi C (strain RKS4594).